The chain runs to 362 residues: Peptide chain release factor 1 (362 aa).

Gln235 is subject to N5-methylglutamine.

It belongs to the prokaryotic/mitochondrial release factor family. In terms of processing, methylated by PrmC. Methylation increases the termination efficiency of RF1.

The protein resides in the cytoplasm. In terms of biological role, peptide chain release factor 1 directs the termination of translation in response to the peptide chain termination codons UAG and UAA. The protein is Peptide chain release factor 1 of Acinetobacter baumannii (strain AYE).